The sequence spans 143 residues: Phosphoprotein 32 (143 aa).

Residues 1 to 14 show a composition bias toward polar residues; sequence MESSNINALQQPSS. Residues 1 to 32 form a disordered region; the sequence is MESSNINALQQPSSIAHHPSKQCASSLNETVK.

Belongs to the varicellovirus ORF32 protein family. Post-translationally, phosphorylated by ORF47 protein.

This Homo sapiens (Human) protein is Phosphoprotein 32.